Here is a 74-residue protein sequence, read N- to C-terminus: ATP synthase subunit 9, mitochondrial (74 aa).

The next 2 membrane-spanning stretches (helical) occupy residues 12 to 32 (LATI…AALI) and 50 to 70 (ILGF…AFLL).

Belongs to the ATPase C chain family. In terms of assembly, F-type ATPases have 2 components, CF(1) - the catalytic core - and CF(0) - the membrane proton channel. CF(1) has five subunits: alpha(3), beta(3), gamma(1), delta(1), epsilon(1). CF(0) has three main subunits: a, b and c.

The protein resides in the mitochondrion membrane. Its function is as follows. Mitochondrial membrane ATP synthase (F(1)F(0) ATP synthase or Complex V) produces ATP from ADP in the presence of a proton gradient across the membrane which is generated by electron transport complexes of the respiratory chain. F-type ATPases consist of two structural domains, F(1) - containing the extramembraneous catalytic core and F(0) - containing the membrane proton channel, linked together by a central stalk and a peripheral stalk. During catalysis, ATP synthesis in the catalytic domain of F(1) is coupled via a rotary mechanism of the central stalk subunits to proton translocation. Part of the complex F(0) domain. A homomeric c-ring of probably 10 subunits is part of the complex rotary element. In Rhizopus oryzae (Mucormycosis agent), this protein is ATP synthase subunit 9, mitochondrial.